The following is a 500-amino-acid chain: Probable malate:quinone oxidoreductase (500 aa).

The protein belongs to the MQO family. Requires FAD as cofactor.

It carries out the reaction (S)-malate + a quinone = a quinol + oxaloacetate. The protein operates within carbohydrate metabolism; tricarboxylic acid cycle; oxaloacetate from (S)-malate (quinone route): step 1/1. The sequence is that of Probable malate:quinone oxidoreductase from Corynebacterium glutamicum (strain R).